The primary structure comprises 509 residues: Steroid 17-alpha-hydroxylase/17,20 lyase (509 aa).

Residue Cys445 coordinates heme.

This sequence belongs to the cytochrome P450 family. Requires heme as cofactor.

It localises to the membrane. It carries out the reaction a C21-steroid + reduced [NADPH--hemoprotein reductase] + O2 = a 17alpha-hydroxy-C21-steroid + oxidized [NADPH--hemoprotein reductase] + H2O + H(+). The catalysed reaction is 17alpha-hydroxyprogesterone + reduced [NADPH--hemoprotein reductase] + O2 = androst-4-ene-3,17-dione + acetate + oxidized [NADPH--hemoprotein reductase] + H2O + 2 H(+). It catalyses the reaction 17alpha-hydroxypregnenolone + reduced [NADPH--hemoprotein reductase] + O2 = 3beta-hydroxyandrost-5-en-17-one + acetate + oxidized [NADPH--hemoprotein reductase] + H2O + 2 H(+). It functions in the pathway lipid metabolism; steroid biosynthesis. Functionally, conversion of pregnenolone and progesterone to their 17-alpha-hydroxylated products and subsequently to dehydroepiandrosterone (DHEA) and androstenedione. Catalyzes both the 17-alpha-hydroxylation and the 17,20-lyase reaction. This is Steroid 17-alpha-hydroxylase/17,20 lyase (CYP17A1) from Squalus acanthias (Spiny dogfish).